A 253-amino-acid polypeptide reads, in one-letter code: Sulfate transporter CysZ (253 aa).

4 helical membrane-spanning segments follow: residues 31–51 (FVILPLLVNILLMGGAFWWLF), 75–95 (LLWPLAVISVLLVFGYFFSTI), 151–171 (IVLLILYFIPGIGQTVAPVLW), and 222–242 (IPLLNLFIMPVAVCGATAMWV).

It belongs to the CysZ family.

The protein resides in the cell inner membrane. In terms of biological role, high affinity, high specificity proton-dependent sulfate transporter, which mediates sulfate uptake. Provides the sulfur source for the cysteine synthesis pathway. This Shigella flexneri protein is Sulfate transporter CysZ.